We begin with the raw amino-acid sequence, 393 residues long: S-adenosylmethionine synthase (393 aa).

Residue histidine 16 coordinates ATP. Aspartate 18 is a binding site for Mg(2+). Glutamate 44 provides a ligand contact to K(+). The L-methionine site is built by glutamate 57 and glutamine 100. Residues 100 to 110 (QSPDIVMGVDG) are flexible loop. Residues 165 to 167 (DAK), 231 to 232 (RF), aspartate 240, 246 to 247 (RK), and lysine 267 each bind ATP. Residue aspartate 240 coordinates L-methionine. Residue lysine 271 coordinates L-methionine.

The protein belongs to the AdoMet synthase family. In terms of assembly, homotetramer; dimer of dimers. Mg(2+) is required as a cofactor. K(+) serves as cofactor.

The protein resides in the cytoplasm. It catalyses the reaction L-methionine + ATP + H2O = S-adenosyl-L-methionine + phosphate + diphosphate. It participates in amino-acid biosynthesis; S-adenosyl-L-methionine biosynthesis; S-adenosyl-L-methionine from L-methionine: step 1/1. Functionally, catalyzes the formation of S-adenosylmethionine (AdoMet) from methionine and ATP. The overall synthetic reaction is composed of two sequential steps, AdoMet formation and the subsequent tripolyphosphate hydrolysis which occurs prior to release of AdoMet from the enzyme. In Coxiella burnetii (strain Dugway 5J108-111), this protein is S-adenosylmethionine synthase.